The primary structure comprises 105 residues: Protein METHYLENE BLUE SENSITIVITY 1 (105 aa).

The disordered stretch occupies residues 26–46 (RGGGKAGIADRTGKEKGGHAK). Residues 36-46 (RTGKEKGGHAK) are compositionally biased toward basic and acidic residues.

In terms of tissue distribution, mainly expressed in the epidermis.

The protein localises to the nucleus. It is found in the cytoplasm. It localises to the stress granule. Required for acclimation to reactive oxygen species (ROS) responses downstream of beta-cyclocitral (beta-cc) or mediated by dihydroactinidiolide, including singlet oxygen 1O(2) detoxification reactions, especially upon light-mediated photooxidative stress, and leading to programmed cell death. Prevents leaf senescence. Involved in cold acclimation. This Arabidopsis thaliana (Mouse-ear cress) protein is Protein METHYLENE BLUE SENSITIVITY 1.